An 859-amino-acid polypeptide reads, in one-letter code: Linoleate 9S-lipoxygenase B (859 aa).

The region spanning 34 to 158 (INIGASVVDG…RYKSDRIFFA (125 aa)) is the PLAT domain. The Lipoxygenase domain maps to 161–859 (AYLPSETPQP…GKGIPNSVSI (699 aa)). Residues 213–246 (EYARPILGGSSEYPYPRRGRTGREPTKADPNCES) form a disordered region. Basic and acidic residues predominate over residues 233 to 244 (TGREPTKADPNC). 4 residues coordinate Fe cation: His521, His526, His711, and Ile859.

The protein belongs to the lipoxygenase family. As to quaternary structure, monomer. Fe cation serves as cofactor. As to expression, fruit specific.

The protein localises to the cytoplasm. It catalyses the reaction (9Z,12Z)-octadecadienoate + O2 = (9S)-hydroperoxy-(10E,12Z)-octadecadienoate. Its pathway is lipid metabolism; oxylipin biosynthesis. In terms of biological role, plant lipoxygenase may be involved in a number of diverse aspects of plant physiology including growth and development, pest resistance, and senescence or responses to wounding. It catalyzes the hydroperoxidation of lipids containing a cis,cis-1,4-pentadiene structure. In Solanum lycopersicum (Tomato), this protein is Linoleate 9S-lipoxygenase B (LOX1.2).